The following is a 461-amino-acid chain: Photosystem II CP43 reaction center protein (461 aa).

Residues 1–2 constitute a propeptide that is removed on maturation; the sequence is ME. Thr-3 carries the post-translational modification N-acetylthreonine. Thr-3 is subject to Phosphothreonine. Helical transmembrane passes span 57–81, 122–143, 166–188, 243–263, and 279–300; these read LFEV…PHLA, LLGP…KDRN, KALY…RKIT, KPFA…LSYS, and WFNN…ASQA. A [CaMn4O5] cluster-binding site is contributed by Glu-355. A helical membrane pass occupies residues 435-459; it reads RARAAAAGFEKGIDRDFEPVLSMTP.

The protein belongs to the PsbB/PsbC family. PsbC subfamily. In terms of assembly, PSII is composed of 1 copy each of membrane proteins PsbA, PsbB, PsbC, PsbD, PsbE, PsbF, PsbH, PsbI, PsbJ, PsbK, PsbL, PsbM, PsbT, PsbX, PsbY, PsbZ, Psb30/Ycf12, at least 3 peripheral proteins of the oxygen-evolving complex and a large number of cofactors. It forms dimeric complexes. Requires Binds multiple chlorophylls and provides some of the ligands for the Ca-4Mn-5O cluster of the oxygen-evolving complex. It may also provide a ligand for a Cl- that is required for oxygen evolution. PSII binds additional chlorophylls, carotenoids and specific lipids. as cofactor.

The protein localises to the plastid. The protein resides in the chloroplast thylakoid membrane. Its function is as follows. One of the components of the core complex of photosystem II (PSII). It binds chlorophyll and helps catalyze the primary light-induced photochemical processes of PSII. PSII is a light-driven water:plastoquinone oxidoreductase, using light energy to abstract electrons from H(2)O, generating O(2) and a proton gradient subsequently used for ATP formation. The chain is Photosystem II CP43 reaction center protein from Gossypium barbadense (Sea Island cotton).